The sequence spans 163 residues: Neurotrophin-3 (163 aa).

An N-terminal signal peptide occupies residues 1-3 (IQS). Residues 4–119 (TSMDQGILTE…ALNRTSRRKR (116 aa)) constitute a propeptide that is removed on maturation. Disordered stretches follow at residues 38-60 (ARTK…ATAS) and 90-131 (LLSE…YSVC). An N-linked (GlcNAc...) asparagine glycan is attached at N112.

This sequence belongs to the NGF-beta family.

It localises to the secreted. Its function is as follows. Seems to promote the survival of visceral and proprioceptive sensory neurons. This chain is Neurotrophin-3 (NTF3), found in Eunectes notaeus (Yellow anaconda).